Reading from the N-terminus, the 226-residue chain is Prolactin (226 aa).

The N-terminal stretch at 1-29 is a signal peptide; sequence MNSQGSDRKAVTLLLLVMSNLLFCQNAHP. Cys-33 and Cys-38 form a disulfide bridge. A phosphoserine mark is found at Ser-53 and Ser-117. Cystine bridges form between Cys-85-Cys-201 and Cys-218-Cys-226.

This sequence belongs to the somatotropin/prolactin family. Interacts with PRLR.

It localises to the secreted. In terms of biological role, prolactin acts primarily on the mammary gland by promoting lactation. In Mesocricetus auratus (Golden hamster), this protein is Prolactin (PRL).